The following is a 544-amino-acid chain: Chaperonin GroEL (544 aa).

Residues 29-32 (TLGP), 86-90 (DGTTT), Gly-413, 476-478 (NAL), and Asp-492 contribute to the ATP site.

This sequence belongs to the chaperonin (HSP60) family. As to quaternary structure, forms a cylinder of 14 subunits composed of two heptameric rings stacked back-to-back. Interacts with the co-chaperonin GroES.

It is found in the cytoplasm. It catalyses the reaction ATP + H2O + a folded polypeptide = ADP + phosphate + an unfolded polypeptide.. In terms of biological role, together with its co-chaperonin GroES, plays an essential role in assisting protein folding. The GroEL-GroES system forms a nano-cage that allows encapsulation of the non-native substrate proteins and provides a physical environment optimized to promote and accelerate protein folding. The polypeptide is Chaperonin GroEL (Desulfitobacterium hafniense (strain DSM 10664 / DCB-2)).